A 137-amino-acid chain; its full sequence is Golgin subfamily A member 7 (137 aa).

Residues C69 and C72 are each lipidated (S-palmitoyl cysteine).

The protein belongs to the ERF4 family. As to quaternary structure, interacts with ZDHHC9.

It localises to the golgi apparatus membrane. Its function is as follows. May be involved in protein transport from Golgi to cell surface. The ZDHHC9-GOLGA7 complex is a palmitoyltransferase specific for HRAS and NRAS. In Gallus gallus (Chicken), this protein is Golgin subfamily A member 7 (GOLGA7).